A 381-amino-acid chain; its full sequence is 4-hydroxyphenylpyruvate dioxygenase (381 aa).

VOC domains are found at residues G22–R156 and A184–K338. The Fe cation site is built by H187, H270, and E349.

Belongs to the 4HPPD family. As to quaternary structure, homodimer. It depends on Fe cation as a cofactor.

It catalyses the reaction 3-(4-hydroxyphenyl)pyruvate + O2 = homogentisate + CO2. The protein operates within amino-acid degradation; L-phenylalanine degradation; acetoacetate and fumarate from L-phenylalanine: step 3/6. The sequence is that of 4-hydroxyphenylpyruvate dioxygenase (hpd) from Streptomyces coelicolor (strain ATCC BAA-471 / A3(2) / M145).